A 104-amino-acid chain; its full sequence is Putative arsenate reductase (104 aa).

Residue Cys-12 is part of the active site.

It belongs to the ArsC family.

It catalyses the reaction [glutaredoxin]-dithiol + arsenate + glutathione + H(+) = glutathionyl-S-S-[glutaredoxin] + arsenite + H2O. Reduction of arsenate [As(V)] to arsenite [As(III)]. This protein expands the substrate specificity of ArsAB pump which can extrude arsenite and antimonite to allow for arsenate pumping and resistance. The protein is Putative arsenate reductase (yfjU) of Escherichia coli (strain K12).